Here is a 324-residue protein sequence, read N- to C-terminus: MASYYEILDVPRSASPDDIKKAYRKKALQWHPDKNPDNKEFAEKKFKEVAEAYEVLSDKHKREIYDRYGREGLTGAGSGPSRSETGGAGPGFTFTFRSPEEVFREFFGSGDPFSELFDDLGVFSELQNQGPRLTGPFFTFSSSFPANSDFSSSSFSFSPGAGAFRSVSTSTTFVQGRRITTRRIMENGQERVEVEEDGQLKSVSINGVPDDLALGLELSRREQQPSVAPGLGVMQVRPTSLSRPPDHDLSEDEDLQLAMAYSLSEMEAAGQKPAGGRGAQQRQHGQPKAQHRDLDVGGTHKSVRGEAAKLSPSSEEKASRCHIL.

Alanine 2 carries the post-translational modification N-acetylalanine. The J domain occupies serine 3–glycine 69. 2 disordered regions span residues arginine 70–glycine 91 and leucine 218–leucine 324. 2 consecutive UIM domains span residues glycine 207–serine 226 and serine 250–alanine 269. Residue serine 311 is modified to Phosphoserine. Basic and acidic residues predominate over residues serine 314–leucine 324. Cysteine 321 is subject to Cysteine methyl ester. Cysteine 321 is lipidated: S-geranylgeranyl cysteine. Positions cysteine 321 to leucine 324 match the CAAX motif motif. Residues histidine 322 to leucine 324 constitute a propeptide, removed in mature form.

In terms of assembly, interacts with HSP70 (HSPA1A or HSPA1B). Interacts with HSPA8/Hsc70. Interacts with PSMA3 and most probably with the whole proteasomal complex. Ubiquitinated by STUB1; does not lead to proteasomal degradation.

It localises to the cytoplasm. It is found in the nucleus. The protein localises to the endoplasmic reticulum membrane. Functionally, functions as a co-chaperone, regulating the substrate binding and activating the ATPase activity of chaperones of the HSP70/heat shock protein 70 family. In parallel, also contributes to the ubiquitin-dependent proteasomal degradation of misfolded proteins. Thereby, may regulate the aggregation and promote the functional recovery of misfolded proteins like HTT, MC4R, PRKN, RHO and SOD1 and be crucial for many biological processes. Isoform 1 which is localized to the endoplasmic reticulum membranes may specifically function in ER-associated protein degradation of misfolded proteins. This Mus musculus (Mouse) protein is DnaJ homolog subfamily B member 2.